Consider the following 220-residue polypeptide: Tumor protein D54 (220 aa).

N-acetylmethionine is present on Met1. The segment covering Met1–Asn14 has biased composition (polar residues). The segment at Met1–Pro26 is disordered. Phosphoserine is present on residues Ser3, Ser12, and Ser19. The stretch at Gly40–Gly82 forms a coiled coil. A phosphoserine mark is found at Ser96, Ser149, Ser168, and Ser175. A Phosphothreonine modification is found at Thr177. Residue Ser180 is modified to Phosphoserine. Thr187 bears the Phosphothreonine mark. The tract at residues Lys189–Phe220 is disordered. Over residues Ser200–Gln212 the composition is skewed to polar residues. Ser206 and Ser209 each carry phosphoserine.

It belongs to the TPD52 family. In terms of assembly, forms a homodimer or heterodimer with other members of the family. Interacts with MAL2.

The polypeptide is Tumor protein D54 (Tpd52l2) (Rattus norvegicus (Rat)).